Reading from the N-terminus, the 389-residue chain is Chaperone protein DnaJ (389 aa).

The region spanning D6–G70 is the J domain. The segment at G142–A224 adopts a CR-type zinc-finger fold. Zn(2+) is bound by residues C155, C158, C172, C175, C198, C201, C212, and C215. 4 CXXCXGXG motif repeats span residues C155 to G162, C172 to G179, C198 to G205, and C212 to G219.

This sequence belongs to the DnaJ family. In terms of assembly, homodimer. Requires Zn(2+) as cofactor.

It localises to the cytoplasm. In terms of biological role, participates actively in the response to hyperosmotic and heat shock by preventing the aggregation of stress-denatured proteins and by disaggregating proteins, also in an autonomous, DnaK-independent fashion. Unfolded proteins bind initially to DnaJ; upon interaction with the DnaJ-bound protein, DnaK hydrolyzes its bound ATP, resulting in the formation of a stable complex. GrpE releases ADP from DnaK; ATP binding to DnaK triggers the release of the substrate protein, thus completing the reaction cycle. Several rounds of ATP-dependent interactions between DnaJ, DnaK and GrpE are required for fully efficient folding. Also involved, together with DnaK and GrpE, in the DNA replication of plasmids through activation of initiation proteins. This is Chaperone protein DnaJ from Enterococcus faecalis (strain ATCC 700802 / V583).